The sequence spans 985 residues: Alanine--tRNA ligase, mitochondrial (985 aa).

The transit peptide at 1–23 directs the protein to the mitochondrion; that stretch reads MAASVAAAAGRLRRAIGRSCPWQ. ATP contacts are provided by residues Arg105, His123, Trp205, and 235 to 237; that span reads LWN. The L-alanine site is built by Asn237 and Asp260. Residue Gly264 coordinates ATP. Positions 632, 636, 749, and 753 each coordinate Zn(2+).

This sequence belongs to the class-II aminoacyl-tRNA synthetase family. Monomer. Zn(2+) is required as a cofactor.

The protein localises to the mitochondrion. It carries out the reaction tRNA(Ala) + L-alanine + ATP = L-alanyl-tRNA(Ala) + AMP + diphosphate. The enzyme catalyses (S)-lactate + ATP + H(+) = (S)-lactoyl-AMP + diphosphate. The catalysed reaction is (S)-lactoyl-AMP + L-lysyl-[protein] = N(6)-[(S)-lactoyl]-L-lysyl-[protein] + AMP + 2 H(+). Functionally, catalyzes the attachment of alanine to tRNA(Ala) in a two-step reaction: alanine is first activated by ATP to form Ala-AMP and then transferred to the acceptor end of tRNA(Ala). Also edits incorrectly charged tRNA(Ala) via its editing domain. In presence of high levels of lactate, also acts as a protein lactyltransferase that mediates lactylation of lysine residues in target proteins, such as CGAS. Acts as an inhibitor of cGAS/STING signaling by catalyzing lactylation of CGAS, preventing the formation of liquid-like droplets in which CGAS is activated. This Rattus norvegicus (Rat) protein is Alanine--tRNA ligase, mitochondrial (Aars2).